The following is a 190-amino-acid chain: Potassium-transporting ATPase KdpC subunit (190 aa).

A helical membrane pass occupies residues 10–30 (TFLFLLLITGGVYPLLTTALG).

The protein belongs to the KdpC family. As to quaternary structure, the system is composed of three essential subunits: KdpA, KdpB and KdpC.

It localises to the cell inner membrane. Functionally, part of the high-affinity ATP-driven potassium transport (or Kdp) system, which catalyzes the hydrolysis of ATP coupled with the electrogenic transport of potassium into the cytoplasm. This subunit acts as a catalytic chaperone that increases the ATP-binding affinity of the ATP-hydrolyzing subunit KdpB by the formation of a transient KdpB/KdpC/ATP ternary complex. The chain is Potassium-transporting ATPase KdpC subunit from Escherichia coli O81 (strain ED1a).